Here is a 380-residue protein sequence, read N- to C-terminus: Putative zinc finger protein C02F5.12 (380 aa).

Residues 137–187 are disordered; sequence NLDIPGTSSDIPSDPSSALKVPKKEVLDESEEILDQTSGSSSFSLNDSEQA. Composition is skewed to polar residues over residues 142–152 and 171–187; these read GTSSDIPSDPS and DQTS…SEQA. The segment at 271–294 adopts a C2H2-type zinc-finger fold; sequence IPCKLCGFECTNVRRMRSHYAKAH.

The protein localises to the nucleus. In Caenorhabditis elegans, this protein is Putative zinc finger protein C02F5.12.